The chain runs to 86 residues: Exodeoxyribonuclease 7 small subunit (86 aa).

The tract at residues 1–26 is disordered; sequence MQDELFETEKIPPKNTKNTKNAPKKS.

It belongs to the XseB family. Heterooligomer composed of large and small subunits.

The protein resides in the cytoplasm. It catalyses the reaction Exonucleolytic cleavage in either 5'- to 3'- or 3'- to 5'-direction to yield nucleoside 5'-phosphates.. Functionally, bidirectionally degrades single-stranded DNA into large acid-insoluble oligonucleotides, which are then degraded further into small acid-soluble oligonucleotides. In Helicobacter pylori (strain ATCC 700392 / 26695) (Campylobacter pylori), this protein is Exodeoxyribonuclease 7 small subunit.